A 400-amino-acid polypeptide reads, in one-letter code: Deoxyguanosinetriphosphate triphosphohydrolase-like protein (400 aa).

One can recognise an HD domain in the interval 73–215; the sequence is RLTHSIEVSQ…AAIADDIAYN (143 aa).

Belongs to the dGTPase family. Type 2 subfamily.

The protein is Deoxyguanosinetriphosphate triphosphohydrolase-like protein of Bartonella tribocorum (strain CIP 105476 / IBS 506).